The chain runs to 307 residues: MTSKLEQLKQYTTVVADTGDFDAIARLKPVDATTNPSLLLKAAALPRYAEHLRQATAGSGGDAGLACDRFAVAVGKDILGVIPGRISTEVDARLSFDSEATLARAHRLIELYDEQGIDRERVLIKIASTWEGIRAAEILEREGIQTNLTLLFSFAQAVACADAGVFLISPFVGRIYDWYKKSENRDYVGAEDPGVQSVSRIYRYYKANGYKTVVMGASFRNLGQIEQLAGCDRLTISPDLLQQLADAQGELPRLLLPGEGEPRQVLDESTFRWQMNEDAMATEKLAEGIRLFARDQEKLEYQLATRH.

Lys125 functions as the Schiff-base intermediate with substrate in the catalytic mechanism.

It belongs to the transaldolase family. Type 1 subfamily. As to quaternary structure, homodimer.

It localises to the cytoplasm. It catalyses the reaction D-sedoheptulose 7-phosphate + D-glyceraldehyde 3-phosphate = D-erythrose 4-phosphate + beta-D-fructose 6-phosphate. The protein operates within carbohydrate degradation; pentose phosphate pathway; D-glyceraldehyde 3-phosphate and beta-D-fructose 6-phosphate from D-ribose 5-phosphate and D-xylulose 5-phosphate (non-oxidative stage): step 2/3. Its function is as follows. Transaldolase is important for the balance of metabolites in the pentose-phosphate pathway. This Pseudomonas aeruginosa (strain LESB58) protein is Transaldolase.